The sequence spans 853 residues: Transforming growth factor beta receptor type 3 (853 aa).

An N-terminal signal peptide occupies residues 1 to 23 (MAVTSHHMIPVMVVLMSACLATA). Topologically, residues 24–789 (GPEPSTRCEL…IFHGLDTLTV (766 aa)) are extracellular. Asn-37, Asn-144, and Asn-493 each carry an N-linked (GlcNAc...) asparagine glycan. An intrachain disulfide couples Cys-55 to Cys-200. One can recognise a ZP domain in the interval 456-730 (KCDHEKMVVA…PRCVTPDDAC (275 aa)). A disordered region spans residues 530–559 (SPGDSSGWPDGYEDLESGDNGFPGDGDEGE). O-linked (Xyl...) (glycosaminoglycan) serine glycans are attached at residues Ser-535 and Ser-546. Residues Asn-572, Asn-591, and Asn-698 are each glycosylated (N-linked (GlcNAc...) asparagine). Intrachain disulfides connect Cys-640–Cys-706, Cys-661–Cys-730, and Cys-711–Cys-723. The interaction with TGF-beta ligand stretch occupies residues 737-751 (MIWTMMQNKKTFTKP). Residues 790–811 (MGIAFAAFVIGALLTGALWYIY) form a helical membrane-spanning segment. The Cytoplasmic segment spans residues 812 to 853 (SHTGETARRQQVPTSPPASENSSAAHSIGSTQSTPCSSSSTA). Over residues 820–836 (RQQVPTSPPASENSSAA) the composition is skewed to polar residues. A disordered region spans residues 820–853 (RQQVPTSPPASENSSAAHSIGSTQSTPCSSSSTA). Positions 838–853 (SIGSTQSTPCSSSSTA) are enriched in low complexity. Thr-842 bears the Phosphothreonine mark.

Forms homodimers and homooligomers. Interacts with DYNLT4. Interacts with integrin ITGA5:ITGB1; this interaction promotes the internalization and trafficking of ITGA5:ITGB1 into endocytic vesicles. Interacts with TGFB1, BMP2, BMP5, BMP7 or GDF5 and inhibin A via the ligand binding domains. Interacts with ALK3/BMPR1A; this interaction results in the cell surface retention of BMPR1A. Interacts with ALK6/BMPR1B; this interaction enhances BMPR1B-mediated stimulation of the BMP signaling pathway. Interacts with the scaffolding protein beta-arrestin2/ARRB2; this interaction mediates internalization of TGFBR3 and thus regulates migration, actin cytoskeleton and activation of CDC42. Post-translationally, extensively modified by glycosaminoglycan groups (GAG). In terms of processing, phosphorylated in the cytoplasmic domain by the type II receptor TGFBR2 at THR-842 to mediate recruitment of ARRB2 and subsequent internalization of TGFBR2 and TGFBR3.

Its subcellular location is the cell membrane. The protein localises to the secreted. It is found in the extracellular space. It localises to the extracellular matrix. Functionally, cell surface receptor that regulates diverse cellular processes including cell proliferation, differentiation, migration, and apoptosis. Initiates BMP, inhibin, and TGF-beta signaling pathways by interacting with different ligands including TGFB1, BMP2, BMP5, BMP7 or GDF5. Alternatively, acts as a cell surface coreceptor for BMP ligands, serving to enhance ligand binding by differentially regulating BMPR1A/ALK3 and BMPR1B/ALK6 receptor trafficking. Promotes epithelial cell adhesion, focal adhesion formation and integrin signaling during epithelial cell spreading on fibronectin. By interacting with the scaffolding protein beta-arrestin2/ARRB2, regulates migration or actin cytoskeleton and promotes the activation of CDC42 as well as the inhibition of NF-kappa-B. In gonadotrope cells, acts as an inhibin A coreceptor and regulates follicle-stimulating hormone (FSH) levels and female fertility. Plays a role in the inhibition of directed and random cell migration in epithelial cells by altering the actin cytoskeletal organization. Participates in epithelial-mesenchymal transformation (EMT) upon binding to BMP2 or TGFB2, by activating the PAR6/SMURF1/RHOA pathway. The sequence is that of Transforming growth factor beta receptor type 3 (Tgfbr3) from Rattus norvegicus (Rat).